Consider the following 191-residue polypeptide: MYVVLEGIDGVGKSTQIELLKSAFQNALFTKEPGGTKIGETLRHIALHENLSELARAFLFLSDRAEHIESVIKPALKEKKLIISDRSLISGMAYSAFSSLELNLLATQSILPAKIILLWIDKEGLKERLSLKSLDKIENQGVEKLLHIQQKFKTHAYALKEQFGCEVLELNAKENAKNLHERISAFIQCVV.

7–14 lines the ATP pocket; sequence GIDGVGKS.

It belongs to the thymidylate kinase family.

It carries out the reaction dTMP + ATP = dTDP + ADP. Functionally, phosphorylation of dTMP to form dTDP in both de novo and salvage pathways of dTTP synthesis. In Helicobacter acinonychis (strain Sheeba), this protein is Thymidylate kinase.